The sequence spans 391 residues: MVHPHLSRTKRTFFSHSSQMISRHIRKTNSLAFVRALSASETAVTPRRKRTVFTDELNKGPSFEDFVSGKAADVFVDPLEAARKDPEAKLPKWLKVPIPKGRSFHSVKKDVRELKLATVCEEAKCPNISECWGGKKSEATATIMLLGDTCTRGCRFCSVKTSRTPAKPDPMEPENTAEAISRWGLGYVVLTTVDRDDLADGGAAHLAETVRLIKQKAPQILVEVLGGDFRGDLTSCDTLAVSGLDVYAHNLETVEALTPHVRDRRATYRQSLSILERAKQAKPSLITKTSLMLGFGETDEQIMQTLRDLRGIGCDVVTFGQYMRPTKRHMKVVEYVRPEKFDYWKEVALEMGFLYVASGPLVRSSYKAGEAFIENVLRKRKHNVGDSPRLA.

A mitochondrion-targeting transit peptide spans 1-44 (MVHPHLSRTKRTFFSHSSQMISRHIRKTNSLAFVRALSASETAV). 7 residues coordinate [4Fe-4S] cluster: cysteine 120, cysteine 125, cysteine 131, cysteine 150, cysteine 154, cysteine 157, and serine 365. Residues 135–354 (KKSEATATIM…KEVALEMGFL (220 aa)) enclose the Radical SAM core domain.

It belongs to the radical SAM superfamily. Lipoyl synthase family. Requires [4Fe-4S] cluster as cofactor.

It localises to the mitochondrion. It catalyses the reaction [[Fe-S] cluster scaffold protein carrying a second [4Fe-4S](2+) cluster] + N(6)-octanoyl-L-lysyl-[protein] + 2 oxidized [2Fe-2S]-[ferredoxin] + 2 S-adenosyl-L-methionine + 4 H(+) = [[Fe-S] cluster scaffold protein] + N(6)-[(R)-dihydrolipoyl]-L-lysyl-[protein] + 4 Fe(3+) + 2 hydrogen sulfide + 2 5'-deoxyadenosine + 2 L-methionine + 2 reduced [2Fe-2S]-[ferredoxin]. It participates in protein modification; protein lipoylation via endogenous pathway; protein N(6)-(lipoyl)lysine from octanoyl-[acyl-carrier-protein]: step 2/2. In terms of biological role, catalyzes the radical-mediated insertion of two sulfur atoms into the C-6 and C-8 positions of the octanoyl moiety bound to the lipoyl domains of lipoate-dependent enzymes, thereby converting the octanoylated domains into lipoylated derivatives. In Clavispora lusitaniae (strain ATCC 42720) (Yeast), this protein is Lipoyl synthase, mitochondrial.